Consider the following 1014-residue polypeptide: Protein argonaute 2 (1014 aa).

Residues 1–15 (MERGGYRGGRGDGRG) show a composition bias toward basic and acidic residues. The segment at 1 to 137 (MERGGYRGGR…PSTSTTVVSE (137 aa)) is disordered. Composition is skewed to gly residues over residues 18–29 (GRGYGGGGGGGE) and 49–58 (RGGGNRGQGR). Residues 83-104 (QFQQPRPQVAPQPSQAPASYAG) show a composition bias toward low complexity. Positions 105–114 (SVGGVAGRGA) are enriched in gly residues. Positions 121–137 (VPSDSASPSTSTTVVSE) are enriched in low complexity. One can recognise a PAZ domain in the interval 369–482 (SVIEYLKLYF…VPMEFCDLVE (114 aa)). The 300-residue stretch at 666–965 (LVLCAMSRKD…VAFRGRMYHE (300 aa)) folds into the Piwi domain. Interaction with guide RNA stretches follow at residues 857-858 (KR), 900-908 (HHGGIGTSK), and 937-959 (FTRCTKPVSLVPPVYYADMVAFR).

Belongs to the argonaute family. Ago subfamily. Interacts with NERD.

In terms of biological role, involved in RNA-mediated post-transcriptional gene silencing (PTGS). Main component of the RNA-induced silencing complex (RISC) that binds to a short guide RNA such as microRNA (miRNA) or small interfering RNA (siRNA). RISC uses the mature miRNA or siRNA as a guide for slicer-directed cleavage of homologous mRNAs to repress gene expression. Associates mainly with siRNAs of 21 nucleotide in length and preferentially recruits small RNAs with a 5' terminal adenosine. Probably involved in antiviral RNA silencing. Associates with siRNA derived from cucumber mosaic virus (CMV). Targeted by turnip yellows virus (TuYV) protein P0 (via F-box-like domain) for probable proteasome degradation and thereby inactivating AGO2 function in RNA silencing. Required to direct NERD-dependent DNA methylation and silencing. The sequence is that of Protein argonaute 2 (AGO2) from Arabidopsis thaliana (Mouse-ear cress).